A 203-amino-acid chain; its full sequence is Ribosome maturation factor RimP (203 aa).

The tract at residues 179 to 203 (VSSEGEDGGEARQAPKLNPKKPGKK) is disordered.

The protein belongs to the RimP family.

Its subcellular location is the cytoplasm. Its function is as follows. Required for maturation of 30S ribosomal subunits. This is Ribosome maturation factor RimP from Gluconobacter oxydans (strain 621H) (Gluconobacter suboxydans).